We begin with the raw amino-acid sequence, 409 residues long: Putative lipoate-protein ligase A (409 aa).

The region spanning 146 to 330 (GPDNCRLLFY…RFQKTFKVDG (185 aa)) is the BPL/LPL catalytic domain. Residues Arg-188, 193–196 (GTVL), and Lys-249 contribute to the ATP site. Residue Lys-249 participates in (R)-lipoate binding.

The protein belongs to the LplA family. In terms of assembly, monomer.

The catalysed reaction is L-lysyl-[lipoyl-carrier protein] + (R)-lipoate + ATP = N(6)-[(R)-lipoyl]-L-lysyl-[lipoyl-carrier protein] + AMP + diphosphate + H(+). Its pathway is protein modification; protein lipoylation via exogenous pathway; protein N(6)-(lipoyl)lysine from lipoate: step 1/2. It functions in the pathway protein modification; protein lipoylation via exogenous pathway; protein N(6)-(lipoyl)lysine from lipoate: step 2/2. Functionally, catalyzes both the ATP-dependent activation of exogenously supplied lipoate to lipoyl-AMP and the transfer of the activated lipoyl onto the lipoyl domains of lipoate-dependent enzymes. This chain is Putative lipoate-protein ligase A (AIM22), found in Saccharomyces cerevisiae (strain ATCC 204508 / S288c) (Baker's yeast).